The following is a 525-amino-acid chain: MDFTEAYADTCSTVGLAAREGNVKVLRKLLKKGRSIDVADNRGWMPIHEASYHNSVECLRMLIRADSSENYIKTKTFEGFCALHLAASQGHWKIIQILLEAGADPNATTLEETTPLFLAVENGQIDVLRLLLRYGANVNGSHSMCGWNALHQASFQGNAEIIKLLLKKGANKECQDDFGITPLFVAAQYGKLESLSILISSGADVNCQALDKATPLFIAAQEGHTECVELLLSSGADPDLYCNEDNWQLPIHAAAQMGHTKILDLLIPLTNRVCDTGPNKVSPVYSAVLGGHEECLEMLLQSGYSPDAQMCLVFGFSSPLCMAFQKDCDFFGIVNILLKYGAQLNELHLAYCLKYERFSVFRYFLKKCCPSTPWDHISEFINHAIKAQTKYKEWLPSLLLAGFDPLNLLCSSWIDSVSDDILIFTLEFTNWRRLPPAVEKMLSARASNSSWALQQHIASVPSLTHLCRLEIWSHLKLEHLQSDGFIRQLPLPRSLHDYLLYAEVLRMNEVPELAVFQDGEISETT.

ANK repeat units follow at residues Asp9–Val38, Arg42–Tyr71, Glu78–Ala107, Glu111–Gly140, Cys145–Cys174, Phe178–Cys207, Asp211–Leu240, Asn246–Asp275, Asn279–Ala308, Gly315–Glu346, and His348–Pro373. Residues Met441–Leu505 enclose the SOCS box domain.

It belongs to the ankyrin SOCS box (ASB) family. Interacts with ELOB and TNFRSF1B.

Its pathway is protein modification; protein ubiquitination. Functionally, probable substrate-recognition component of a SCF-like ECS (Elongin-Cullin-SOCS-box protein) E3 ubiquitin-protein ligase complex which mediates the ubiquitination and subsequent proteasomal degradation of target proteins. Recognizes TNFRSF1B. The sequence is that of Ankyrin repeat and SOCS box protein 3 (ASB3) from Bos taurus (Bovine).